The sequence spans 428 residues: Forkhead box protein B2 (428 aa).

Positions 12–103 (QKPPYSYISL…GDMFENGSFL (92 aa)) form a DNA-binding region, fork-head. Disordered regions lie at residues 118 to 217 (HLHS…MQEA) and 408 to 428 (PTAAGRADSKGSSLHSVLVHS). Residues 136–163 (LHPHHPHHAHHHHHHHHHAAHHHHHHHP) show a composition bias toward basic residues. Pro residues-rich tracts occupy residues 164–174 (PQPPPPPPPHM) and 183–192 (APAPQPPHLP). A compositionally biased stretch (low complexity) spans 193–217 (SQPAQQPQPQSQPPQTSHPGKMQEA).

It localises to the nucleus. Transcription factor. The protein is Forkhead box protein B2 (Foxb2) of Mus musculus (Mouse).